A 323-amino-acid chain; its full sequence is 1D-myo-inositol 2-acetamido-2-deoxy-alpha-D-glucopyranoside deacetylase 1 (323 aa).

His-30, Asp-33, and His-165 together coordinate Zn(2+).

The protein belongs to the MshB deacetylase family. Requires Zn(2+) as cofactor.

The enzyme catalyses 1D-myo-inositol 2-acetamido-2-deoxy-alpha-D-glucopyranoside + H2O = 1D-myo-inositol 2-amino-2-deoxy-alpha-D-glucopyranoside + acetate. Catalyzes the deacetylation of 1D-myo-inositol 2-acetamido-2-deoxy-alpha-D-glucopyranoside (GlcNAc-Ins) in the mycothiol biosynthesis pathway. This is 1D-myo-inositol 2-acetamido-2-deoxy-alpha-D-glucopyranoside deacetylase 1 from Catenulispora acidiphila (strain DSM 44928 / JCM 14897 / NBRC 102108 / NRRL B-24433 / ID139908).